A 279-amino-acid polypeptide reads, in one-letter code: Diaminopimelate epimerase (279 aa).

Positions 11 and 72 each coordinate substrate. Cys81 (proton donor) is an active-site residue. Substrate contacts are provided by residues Gly82–Asn83, Asn187, and Glu205–Arg206. Catalysis depends on Cys215, which acts as the Proton acceptor. Gly216 to Thr217 contacts substrate.

The protein belongs to the diaminopimelate epimerase family. Homodimer.

The protein resides in the cytoplasm. It catalyses the reaction (2S,6S)-2,6-diaminopimelate = meso-2,6-diaminopimelate. The protein operates within amino-acid biosynthesis; L-lysine biosynthesis via DAP pathway; DL-2,6-diaminopimelate from LL-2,6-diaminopimelate: step 1/1. In terms of biological role, catalyzes the stereoinversion of LL-2,6-diaminopimelate (L,L-DAP) to meso-diaminopimelate (meso-DAP), a precursor of L-lysine and an essential component of the bacterial peptidoglycan. The chain is Diaminopimelate epimerase from Aquifex aeolicus (strain VF5).